Here is a 208-residue protein sequence, read N- to C-terminus: Intraflagellar transport protein 43 homolog (208 aa).

Met1 carries the post-translational modification N-acetylmethionine. Residues 18–65 (SRAKMGRRAQQESAQAENHLNGKNSSLTLTGETSSAKLPRCRQGGWAG) form a disordered region. Positions 28–53 (QESAQAENHLNGKNSSLTLTGETSSA) are enriched in polar residues. Residue Ser78 is modified to Phosphoserine.

The protein belongs to the IFT43 family. Component of the IFT complex A (IFT-A) complex. IFT-A complex is divided into a core subcomplex composed of IFT122:IFT140:WDR19 which is associated with TULP3 and a peripheral subcomplex composed of IFT43:WDR35:TTC21B. Interacts directy with IFT122, WDR35 and TTC21B. As to expression, expressed in the retina, predominantly in the photoreceptor outer segment.

Its subcellular location is the cytoplasm. The protein localises to the cytoskeleton. It localises to the cell projection. The protein resides in the cilium. As a component of IFT complex A (IFT-A), a complex required for retrograde ciliary transport and entry into cilia of G protein-coupled receptors (GPCRs), it is involved in ciliogenesis. Involved in retrograde ciliary transport along microtubules from the ciliary tip to the base. The sequence is that of Intraflagellar transport protein 43 homolog from Homo sapiens (Human).